A 129-amino-acid polypeptide reads, in one-letter code: Sm-like protein LSM4 (129 aa).

Positions 2–75 (LPLSLLKTAQ…IKYLRVPDEV (74 aa)) constitute a Sm domain. Positions 79-90 (VQEEKTRTDRKP) are enriched in basic and acidic residues. The interval 79 to 129 (VQEEKTRTDRKPPGVGRGRGRGVDDGGARGRGRGTSMGKMGGNRGAGRGRG) is disordered. The span at 111 to 129 (RGTSMGKMGGNRGAGRGRG) shows a compositional bias: gly residues.

This sequence belongs to the snRNP Sm proteins family. Component of the heptameric LSM1-LSM7 complex that forms a seven-membered ring structure with a donut shape. The LSM subunits are arranged in the order LSM1, LSM2, LSM3, LSM6, LSM5, LSM7 and LSM4. LSM4 subunit interacts only with its two neighboring subunits, LSM1A or LSM1B and LSM7. Component of the heptameric LSM2-LSM8 complex that forms a seven-membered ring structure with a donut shape. The LSM subunits are arranged in the order LSM8, LSM2, LSM3, LSM6, LSM5, LSM7 and LSM4. LSM4 subunit interacts only with its two neighboring subunits, LSM8 and LSM7. Methylated by PMRT15/SKB1 in response to salt stress or abscisic acid (ABA) treatment. Expressed in roots, leaves, stems, flowers and siliques.

The protein localises to the cytoplasm. Its subcellular location is the nucleus. Component of LSM protein complexes, which are involved in RNA processing. Component of the cytoplasmic LSM1-LSM7 complex which is involved in mRNA degradation by promoting decapping and leading to accurate 5'-3' mRNA decay. The cytoplasmic LSM1-LSM7 complex regulates developmental gene expression by the decapping of specific development-related transcripts. Component of the nuclear LSM2-LSM8 complex which is involved splicing nuclear mRNAs. LSM2-LSM8 binds directly to the U6 small nuclear RNAs (snRNAs) and is essential for accurate splicing of selected development-related mRNAs through the stabilization of the spliceosomal U6 snRNA. Plays a critical role in the regulation of development-related gene expression. This Arabidopsis thaliana (Mouse-ear cress) protein is Sm-like protein LSM4.